Reading from the N-terminus, the 359-residue chain is Doublesex- and mab-3-related transcription factor B1 (359 aa).

The DM DNA-binding region spans 7-54 (CSRCRNHGYLVPVKGHTGKCRWKQCICDKCYLITERQKIMAAQKVLRT). Disordered stretches follow at residues 111 to 149 (PPQA…RDRS) and 262 to 359 (SGLV…EQSN). Pro residues-rich tracts occupy residues 277 to 299 (CSPP…PQPQ) and 315 to 325 (LPPPPPPPSPP). The span at 348–359 (EPSQDSPQEQSN) shows a compositional bias: polar residues.

This sequence belongs to the DMRT family. As to expression, brain.

The protein localises to the nucleus. The sequence is that of Doublesex- and mab-3-related transcription factor B1 (Dmrtb1) from Mus musculus (Mouse).